The following is a 246-amino-acid chain: Probable transcriptional regulatory protein HD_0596 (246 aa).

This sequence belongs to the TACO1 family.

It is found in the cytoplasm. The protein is Probable transcriptional regulatory protein HD_0596 of Haemophilus ducreyi (strain 35000HP / ATCC 700724).